Reading from the N-terminus, the 148-residue chain is Large ribosomal subunit protein bL9 (148 aa).

The protein belongs to the bacterial ribosomal protein bL9 family.

In terms of biological role, binds to the 23S rRNA. The protein is Large ribosomal subunit protein bL9 of Parabacteroides distasonis (strain ATCC 8503 / DSM 20701 / CIP 104284 / JCM 5825 / NCTC 11152).